We begin with the raw amino-acid sequence, 353 residues long: Nuclear hormone receptor family member nhr-27 (353 aa).

A DNA-binding region (nuclear receptor) is located at residues 24-102 (VSNCVVCGRL…KGMLDLSRYT (79 aa)). 2 NR C4-type zinc fingers span residues 27–47 (CVVC…CSAC) and 64–85 (CKYS…CKFC). In terms of domain architecture, NR LBD spans 119–351 (ETLFLTMTVS…SQVHQDVIEF (233 aa)). The interval 340-351 (QPSQVHQDVIEF) is AF-2.

It belongs to the nuclear hormone receptor family.

Its subcellular location is the nucleus. Its function is as follows. Ligand-activated transcription factor. Involved in lifespan extension in a manner dependent upon mitochondrial function. The protein is Nuclear hormone receptor family member nhr-27 of Caenorhabditis elegans.